Reading from the N-terminus, the 407-residue chain is Eukaryotic initiation factor 4A-II (407 aa).

Residues 1–22 are disordered; that stretch reads MSGGSADYNREHGGPEGMDPDG. The Q motif motif lies at 33–61; it reads DNFDDMNLKESLLRGIYAYGFEKPSAIQQ. The 172-residue stretch at 64–235 folds into the Helicase ATP-binding domain; sequence IIPCIKGYDV…KKFMRDPIRI (172 aa). 77-84 contacts ATP; it reads AQSGTGKT. The residue at position 159 (threonine 159) is a Phosphothreonine. A DEAD box motif is present at residues 183–186; the sequence is DEAD. The 162-residue stretch at 246–407 folds into the Helicase C-terminal domain; that stretch reads GIKQFYINVE…EMPMNVADLI (162 aa).

The protein belongs to the DEAD box helicase family. eIF4A subfamily. As to quaternary structure, eIF4F is a multi-subunit complex, the composition of which varies with external and internal environmental conditions. It is composed of at least EIF4A, EIF4E and EIF4G1/EIFFG3. Interacts with EIF4E. May interact with NOM1.

The enzyme catalyses ATP + H2O = ADP + phosphate + H(+). In terms of biological role, ATP-dependent RNA helicase which is a subunit of the eIF4F complex involved in cap recognition and is required for mRNA binding to ribosome. In the current model of translation initiation, eIF4A unwinds RNA secondary structures in the 5'-UTR of mRNAs which is necessary to allow efficient binding of the small ribosomal subunit, and subsequent scanning for the initiator codon. In Bos taurus (Bovine), this protein is Eukaryotic initiation factor 4A-II (EIF4A2).